Here is a 296-residue protein sequence, read N- to C-terminus: Glycine--tRNA ligase alpha subunit (296 aa).

It belongs to the class-II aminoacyl-tRNA synthetase family. As to quaternary structure, tetramer of two alpha and two beta subunits.

The protein localises to the cytoplasm. It catalyses the reaction tRNA(Gly) + glycine + ATP = glycyl-tRNA(Gly) + AMP + diphosphate. This chain is Glycine--tRNA ligase alpha subunit, found in Polynucleobacter necessarius subsp. necessarius (strain STIR1).